The primary structure comprises 332 residues: Adenine deaminase (332 aa).

Positions 16, 18, and 196 each coordinate Zn(2+). E199 acts as the Proton donor in catalysis. D277 is a Zn(2+) binding site. D278 contributes to the substrate binding site.

Belongs to the metallo-dependent hydrolases superfamily. Adenosine and AMP deaminases family. Adenine deaminase type 2 subfamily. The cofactor is Zn(2+).

The enzyme catalyses adenine + H2O + H(+) = hypoxanthine + NH4(+). Functionally, catalyzes the hydrolytic deamination of adenine to hypoxanthine. Plays an important role in the purine salvage pathway and in nitrogen catabolism. The polypeptide is Adenine deaminase (Acinetobacter baylyi (strain ATCC 33305 / BD413 / ADP1)).